The chain runs to 370 residues: Galactose-1-phosphate uridylyltransferase (370 aa).

Residues C51 and C54 each coordinate Zn(2+). UDP-alpha-D-glucose contacts are provided by residues A60 and 76-77 (NG). H121 provides a ligand contact to Zn(2+). N166 provides a ligand contact to UDP-alpha-D-glucose. H177 is a binding site for Zn(2+). The active-site Tele-UMP-histidine intermediate is H179. Position 181 (Q181) interacts with UDP-alpha-D-glucose. Positions 195, 294, 311, and 313 each coordinate Fe cation. UDP-alpha-D-glucose-binding positions include 326-329 (KFLV) and 331-332 (FE).

It belongs to the galactose-1-phosphate uridylyltransferase type 1 family. As to quaternary structure, homodimer. Zn(2+) is required as a cofactor.

It catalyses the reaction alpha-D-galactose 1-phosphate + UDP-alpha-D-glucose = alpha-D-glucose 1-phosphate + UDP-alpha-D-galactose. It participates in carbohydrate metabolism; galactose metabolism. This Kluyveromyces lactis (strain ATCC 8585 / CBS 2359 / DSM 70799 / NBRC 1267 / NRRL Y-1140 / WM37) (Yeast) protein is Galactose-1-phosphate uridylyltransferase (GAL7).